We begin with the raw amino-acid sequence, 2531 residues long: Putative neurobeachin homolog (2531 aa).

3 stretches are compositionally biased toward acidic residues: residues 1 to 10 (MDISETEYND), 26 to 35 (EDEVNDEESN), and 62 to 74 (EPSDDQQNVEESE). 4 disordered regions span residues 1 to 101 (MDIS…SPPP), 1363 to 1398 (NDGDHASIKNGSDHSENGADEETEEKGEQGQGDNGG), 1420 to 1440 (EELKKMHQSNGRRPSTLMPPQ), and 1642 to 1670 (RFVPNPYGSRHEEANLPEGEKNEEPEISE). A compositionally biased stretch (basic and acidic residues) spans 1363–1379 (NDGDHASIKNGSDHSEN). Polar residues predominate over residues 1427 to 1440 (QSNGRRPSTLMPPQ). Positions 1650–1670 (SRHEEANLPEGEKNEEPEISE) are enriched in basic and acidic residues. A BEACH-type PH domain is found at 1714–1822 (PSSQSACFST…TVRKVVYQLP (109 aa)). Residues 1841–2130 (MTPRQLFKHS…QLLAEAHPPR (290 aa)) form the BEACH domain. WD repeat units lie at residues 2289–2332 (GHGD…GFIA), 2350–2389 (GHEASISALCVSAEHGLVVSGCEDGVILIHTTASDLLRRI), 2429–2468 (LSEEKIECVTVTRDGEFAVTGAVNGRITIWRMFPLNKLYT), and 2471–2510 (PLNSAVRSVAVVASHRFILGGLDSGAIVVFNADFNRWHYE).

It belongs to the WD repeat neurobeachin family. Interacts with RII subunit of PKA.

It is found in the cytoplasm. The protein localises to the membrane. Its subcellular location is the nucleus. Functionally, binds to type II regulatory subunits of protein kinase A and anchors/targets them to the membrane. May anchor the kinase to cytoskeletal and/or organelle-associated proteins. Regulates endosomal traffic in polarized epithelial cells such as the vulval precursor cells and intestinal cells. Thought to act as a negative regulator of lin-12 activity in vulval precursor cells. May have a role in the internalization process from basolateral surface of polarized epithelial cells. The polypeptide is Putative neurobeachin homolog (Caenorhabditis briggsae).